Here is a 146-residue protein sequence, read N- to C-terminus: Holo-[acyl-carrier-protein] synthase (146 aa).

Positions 9 and 58 each coordinate Mg(2+).

This sequence belongs to the P-Pant transferase superfamily. AcpS family. Mg(2+) is required as a cofactor.

It is found in the cytoplasm. It catalyses the reaction apo-[ACP] + CoA = holo-[ACP] + adenosine 3',5'-bisphosphate + H(+). Transfers the 4'-phosphopantetheine moiety from coenzyme A to a Ser of acyl-carrier-protein. The protein is Holo-[acyl-carrier-protein] synthase of Baumannia cicadellinicola subsp. Homalodisca coagulata.